The following is a 105-amino-acid chain: Small ribosomal subunit protein uS10 (105 aa).

Belongs to the universal ribosomal protein uS10 family. As to quaternary structure, part of the 30S ribosomal subunit.

Its function is as follows. Involved in the binding of tRNA to the ribosomes. The polypeptide is Small ribosomal subunit protein uS10 (Trichodesmium erythraeum (strain IMS101)).